The primary structure comprises 516 residues: Apolipoprotein N-acyltransferase (516 aa).

6 helical membrane passes run 24–44, 58–78, 90–110, 125–145, 163–183, and 192–212; these read LAQA…LLYL, GWCY…ISIH, LLTL…AWLW, LAFA…LTGF, APLG…ALLV, and PPAL…GLAL. The CN hydrolase domain maps to 230-471; sequence VQGNVEQNLK…RAVLYGEVTP (242 aa). E270 acts as the Proton acceptor in catalysis. K331 is an active-site residue. C383 acts as the Nucleophile in catalysis. A helical transmembrane segment spans residues 479 to 499; it reads LRWRAWPLAGLAVLLLGWALL.

Belongs to the CN hydrolase family. Apolipoprotein N-acyltransferase subfamily.

Its subcellular location is the cell inner membrane. The enzyme catalyses N-terminal S-1,2-diacyl-sn-glyceryl-L-cysteinyl-[lipoprotein] + a glycerophospholipid = N-acyl-S-1,2-diacyl-sn-glyceryl-L-cysteinyl-[lipoprotein] + a 2-acyl-sn-glycero-3-phospholipid + H(+). It participates in protein modification; lipoprotein biosynthesis (N-acyl transfer). Its function is as follows. Catalyzes the phospholipid dependent N-acylation of the N-terminal cysteine of apolipoprotein, the last step in lipoprotein maturation. The chain is Apolipoprotein N-acyltransferase from Azotobacter vinelandii (strain DJ / ATCC BAA-1303).